A 312-amino-acid chain; its full sequence is tRNA-cytidine(32) 2-sulfurtransferase (312 aa).

Positions 48–53 match the PP-loop motif motif; it reads SGGKDS. [4Fe-4S] cluster-binding residues include cysteine 123, cysteine 126, and cysteine 214.

Belongs to the TtcA family. As to quaternary structure, homodimer. Mg(2+) is required as a cofactor. It depends on [4Fe-4S] cluster as a cofactor.

Its subcellular location is the cytoplasm. It carries out the reaction cytidine(32) in tRNA + S-sulfanyl-L-cysteinyl-[cysteine desulfurase] + AH2 + ATP = 2-thiocytidine(32) in tRNA + L-cysteinyl-[cysteine desulfurase] + A + AMP + diphosphate + H(+). It functions in the pathway tRNA modification. Functionally, catalyzes the ATP-dependent 2-thiolation of cytidine in position 32 of tRNA, to form 2-thiocytidine (s(2)C32). The sulfur atoms are provided by the cysteine/cysteine desulfurase (IscS) system. The sequence is that of tRNA-cytidine(32) 2-sulfurtransferase from Mannheimia succiniciproducens (strain KCTC 0769BP / MBEL55E).